Consider the following 172-residue polypeptide: Adenine phosphoribosyltransferase (172 aa).

This sequence belongs to the purine/pyrimidine phosphoribosyltransferase family. In terms of assembly, homodimer.

It is found in the cytoplasm. The catalysed reaction is AMP + diphosphate = 5-phospho-alpha-D-ribose 1-diphosphate + adenine. It functions in the pathway purine metabolism; AMP biosynthesis via salvage pathway; AMP from adenine: step 1/1. In terms of biological role, catalyzes a salvage reaction resulting in the formation of AMP, that is energically less costly than de novo synthesis. The chain is Adenine phosphoribosyltransferase from Streptococcus thermophilus (strain ATCC BAA-250 / LMG 18311).